A 502-amino-acid polypeptide reads, in one-letter code: uncharacterized protein (502 aa).

This is an uncharacterized protein from Frog virus 3 (isolate Goorha) (FV-3).